The sequence spans 497 residues: CRISPR-associated endodeoxyribonuclease Cas12f1 (497 aa).

The segment at 29 to 122 (RKDLSTMSRF…PTYKITTAPI (94 aa)) is recognition domain (REC). The tract at residues 123–214 (RLQNNIYKLI…YCIIPYTFPT (92 aa)) is wedge domain (WED). The interval 215 to 223 (HETVLDPDK) is linker. The interval 224–374 (VMGVDLGVAK…VAINPQYTSQ (151 aa)) is ruvC-I. Residues Asp-228 and Glu-327 contribute to the active site. The tract at residues 375–432 (RCSMCGYIEKTNRSSQAVFECKQCGYGSRTICINCRHVQVSGDVCEECGGIVKKENVN) is target nucleic acid-binding (TNB). Zn(2+) contacts are provided by Cys-376, Cys-379, Cys-395, and Cys-398. Positions 433–453 (ADYNAAKNISTPYIDQIIMEK) are ruvC-II. Asp-434 is a catalytic residue.

This sequence belongs to the CRISPR-associated endonuclease Cas12f family. In terms of assembly, an asymmetric homodimer. Guide RNA is probably required for dimerization. Mg(2+) serves as cofactor. The cofactor is Zn(2+).

CRISPR (clustered regularly interspaced short palindromic repeat), is an adaptive immune system that provides protection against mobile genetic elements (viruses, transposable elements and conjugative plasmids). CRISPR clusters contain sequences complementary to antecedent mobile elements and target invading nucleic acids. CRISPR clusters are transcribed and processed into CRISPR RNA (crRNA), which requires a trans-encoded small RNA (tracrRNA), but not this protein. Recognizes a short motif in the CRISPR repeat sequences (the 5' PAM or protospacer adjacent motif, TTC in this organism) to help distinguish self versus nonself, as targets within the CRISPR locus do not have PAMs. Has dsDNA endonuclease activity upon expression in E.coli of this protein, a mini CRISPR array and the probable tracrRNA. Plasmid cleavage is centered around positions 24 base pairs 3' of PAM. The mini system protects E.coli against transformation by foreign plasmids. The chain is CRISPR-associated endodeoxyribonuclease Cas12f1 from Syntrophomonas palmitatica (strain DSM 18709 / JCM 14374 / NBRC 102128 / MPA).